The following is a 454-amino-acid chain: tRNA modification GTPase MnmE (454 aa).

Positions 23, 80, and 120 each coordinate (6S)-5-formyl-5,6,7,8-tetrahydrofolate. Positions 216-377 constitute a TrmE-type G domain; sequence GMKVVIAGRP…LRNNLKQSMG (162 aa). N226 is a K(+) binding site. GTP-binding positions include 226–231, 245–251, 270–273, 335–338, and 358–360; these read NAGKSS, TDIAGTT, DTAG, NKAD, and SAR. S230 serves as a coordination point for Mg(2+). Residues T245, I247, and T250 each contribute to the K(+) site. T251 serves as a coordination point for Mg(2+). Residue K454 coordinates (6S)-5-formyl-5,6,7,8-tetrahydrofolate.

Belongs to the TRAFAC class TrmE-Era-EngA-EngB-Septin-like GTPase superfamily. TrmE GTPase family. As to quaternary structure, homodimer. Heterotetramer of two MnmE and two MnmG subunits. The cofactor is K(+).

It localises to the cytoplasm. Functionally, exhibits a very high intrinsic GTPase hydrolysis rate. Involved in the addition of a carboxymethylaminomethyl (cmnm) group at the wobble position (U34) of certain tRNAs, forming tRNA-cmnm(5)s(2)U34. The protein is tRNA modification GTPase MnmE of Salmonella paratyphi A (strain ATCC 9150 / SARB42).